Reading from the N-terminus, the 503-residue chain is Maturase K (503 aa).

This sequence belongs to the intron maturase 2 family. MatK subfamily.

The protein localises to the plastid. The protein resides in the chloroplast. Usually encoded in the trnK tRNA gene intron. Probably assists in splicing its own and other chloroplast group II introns. This chain is Maturase K, found in Syzygium anisatum (Aniseed myrtle).